A 496-amino-acid chain; its full sequence is Neuronal acetylcholine receptor subunit beta-4 (496 aa).

The signal sequence occupies residues 1–19 (MRSALPLVLFSLVALCGRG). Over 20 to 236 (DCRVANAEEK…IIKRKPLFYT (217 aa)) the chain is Extracellular. N-linked (GlcNAc...) asparagine glycosylation is found at Asn36, Asn93, Asn138, and Asn166. Cys153 and Cys167 are disulfide-bonded. A helical membrane pass occupies residues 237-257 (INLIIPCVLITSLAILVFYLP). Residues 258 to 265 (SDCGEKMT) lie on the Cytoplasmic side of the membrane. Na(+) is bound at residue Glu262. Residues 266–286 (LCISVLLALTVFLLLISKIVP) traverse the membrane as a helical segment. Over 287–298 (PTSLNVPLIGKY) the chain is Extracellular. A helical transmembrane segment spans residues 299-319 (LMFTMVLVTFSIVTSVCVLNV). Topologically, residues 320 to 464 (HHRSPSTHTM…WKYVAMVVDR (145 aa)) are cytoplasmic. A helical membrane pass occupies residues 465–485 (LFLWVFVVVCVLGTVGLFLPP). Topologically, residues 486–496 (LFQTHTPSEEP) are extracellular.

This sequence belongs to the ligand-gated ion channel (TC 1.A.9) family. Acetylcholine receptor (TC 1.A.9.1) subfamily. Beta-4/CHRNB4 sub-subfamily. As to quaternary structure, neuronal AChR is composed of two different types of subunits: alpha and beta. CHRNB4/Beta-4 subunit can be combined to CHRNA2/alpha-2, CHRNA3/alpha-3 or CHRNA4/alpha-4, CHRNA5/alpha-5 and CHRNB3/beta-3 to give rise to functional receptors. Forms stoichiometries such as (CHRNA3)2:(CHRNB4)3 or (CHRNA3:CHRNB4)2:CHRNB3. Interacts with RIC3; which is required for proper folding and assembly. Interacts with LYPD6.

It is found in the synaptic cell membrane. It localises to the cell membrane. It carries out the reaction Ca(2+)(in) = Ca(2+)(out). The catalysed reaction is K(+)(in) = K(+)(out). The enzyme catalyses Na(+)(in) = Na(+)(out). Component of neuronal acetylcholine receptors (nAChRs) that function as pentameric, ligand-gated cation channels with high calcium permeability among other activities. nAChRs are excitatory neurotrasnmitter receptors formed by a collection of nAChR subunits known to mediate synaptic transmission in the nervous system and the neuromuscular junction. Each nAchR subunit confers differential attributes to channel properties, including activation, deactivation and desensitization kinetics, pH sensitivity, cation permeability, and binding to allosteric modulators. CHRNB4 forms heteropentameric neuronal acetylcholine receptors with CHRNA2, CHRNA3 and CHRNA4, as well as CHRNA5 and CHRNB3 as accesory subunits. CHRNA3:CHRNB4 being predominant in neurons of the autonomic ganglia, it is known as ganglionic nicotinic receptor. CHRNA3:CHRNB4 or CHRNA3:CHRNA5:CHRNB4 play also an important role in the habenulo-interpeduncular tract, modulating the mesolimbic dopamine system and affecting reward circuits and addiction. Hypothalamic CHRNA3:CHRNB4 nAChR activation by nicotine leads to activation of POMC neurons and a decrease in food intake. In Bos taurus (Bovine), this protein is Neuronal acetylcholine receptor subunit beta-4 (CHRNB4).